A 222-amino-acid chain; its full sequence is Large ribosomal subunit protein mL64 (222 aa).

Disordered stretches follow at residues Ala19–Leu46 and Lys188–Ser222. Basic residues predominate over residues Tyr25 to Gly36. Residues Met99–Gln212 are a coiled coil. The Nuclear localization signal signature appears at Lys184 to Glu200. Residues Ala203–Gln212 show a composition bias toward low complexity.

This sequence belongs to the mitochondrion-specific ribosomal protein mL64 family. In terms of assembly, component of the mitochondrial large ribosomal subunit (mt-LSU). Mature mammalian 55S mitochondrial ribosomes consist of a small (28S) and a large (39S) subunit. The 28S small subunit contains a 12S ribosomal RNA (12S mt-rRNA) and 30 different proteins. The 39S large subunit contains a 16S rRNA (16S mt-rRNA), a copy of mitochondrial valine transfer RNA (mt-tRNA(Val)), which plays an integral structural role, and 52 different proteins. Interacts with GADD45A, GADD45B and GADD45G. Interacts with NR4A1 via the NR4A1 AB domain. Interacts with ATAD3A and ATAD3B. As to quaternary structure, (Microbial infection) Interacts with the human papilloma virus type 16 (HPV 16) minor capsid protein L2. Widely expressed. Highly expressed in the thyroid gland, heart, lymph nodes, trachea and adrenal tissues. Expressed at lower level in liver skeletal muscle, kidney, pancreas, testis, ovary and stomach. Barely detectable in adrenal adenoma and papillary thyroid cancer.

It is found in the mitochondrion. The protein resides in the nucleus. Functionally, acts as a negative regulator of G1 to S cell cycle phase progression by inhibiting cyclin-dependent kinases. Inhibitory effects are additive with GADD45 proteins but also occur in the absence of GADD45 proteins. Acts as a repressor of the orphan nuclear receptor NR4A1 by inhibiting AB domain-mediated transcriptional activity. May be involved in the hormone-mediated regulation of NR4A1 transcriptional activity. May play a role in mitochondrial protein synthesis. This chain is Large ribosomal subunit protein mL64 (GADD45GIP1), found in Homo sapiens (Human).